A 513-amino-acid chain; its full sequence is ATP synthase subunit alpha (513 aa).

169-176 (GDRQTGKT) is a binding site for ATP.

Belongs to the ATPase alpha/beta chains family. In terms of assembly, F-type ATPases have 2 components, CF(1) - the catalytic core - and CF(0) - the membrane proton channel. CF(1) has five subunits: alpha(3), beta(3), gamma(1), delta(1), epsilon(1). CF(0) has three main subunits: a(1), b(2) and c(9-12). The alpha and beta chains form an alternating ring which encloses part of the gamma chain. CF(1) is attached to CF(0) by a central stalk formed by the gamma and epsilon chains, while a peripheral stalk is formed by the delta and b chains.

The protein localises to the cell inner membrane. The enzyme catalyses ATP + H2O + 4 H(+)(in) = ADP + phosphate + 5 H(+)(out). Produces ATP from ADP in the presence of a proton gradient across the membrane. The alpha chain is a regulatory subunit. This Pasteurella multocida (strain Pm70) protein is ATP synthase subunit alpha.